A 434-amino-acid chain; its full sequence is Protein translocase subunit SecY (434 aa).

Helical transmembrane passes span 19–39 (LFTL…IPGI), 73–93 (IFML…LLVY), 117–137 (YLTI…AKGI), 148–168 (YIFV…WFGE), 179–199 (TSLI…FNLF), 209–229 (VNPV…ILII), 264–284 (VLPV…LSGF), 300–320 (PNGF…TYFY), 362–382 (FSGS…QNIF), and 391–411 (IMGG…LIHI).

Belongs to the SecY/SEC61-alpha family. In terms of assembly, component of the Sec protein translocase complex. Heterotrimer consisting of SecY, SecE and SecG subunits. The heterotrimers can form oligomers, although 1 heterotrimer is thought to be able to translocate proteins. Interacts with the ribosome. Interacts with SecDF, and other proteins may be involved. Interacts with SecA.

Its subcellular location is the cell inner membrane. Functionally, the central subunit of the protein translocation channel SecYEG. Consists of two halves formed by TMs 1-5 and 6-10. These two domains form a lateral gate at the front which open onto the bilayer between TMs 2 and 7, and are clamped together by SecE at the back. The channel is closed by both a pore ring composed of hydrophobic SecY resides and a short helix (helix 2A) on the extracellular side of the membrane which forms a plug. The plug probably moves laterally to allow the channel to open. The ring and the pore may move independently. The chain is Protein translocase subunit SecY from Borreliella burgdorferi (strain ATCC 35210 / DSM 4680 / CIP 102532 / B31) (Borrelia burgdorferi).